The primary structure comprises 144 residues: Putative sugar phosphate isomerase RC0402 (144 aa).

Substrate is bound at residue H12. H101 functions as the Proton donor in the catalytic mechanism. R135 provides a ligand contact to substrate.

The protein belongs to the LacAB/RpiB family.

The sequence is that of Putative sugar phosphate isomerase RC0402 from Rickettsia conorii (strain ATCC VR-613 / Malish 7).